Reading from the N-terminus, the 55-residue chain is Large ribosomal subunit protein bL32 (55 aa).

Residues 1-19 (MAVPKFKKSRANTRARRSQ) are compositionally biased toward basic residues. Residues 1–22 (MAVPKFKKSRANTRARRSQWKA) form a disordered region.

This sequence belongs to the bacterial ribosomal protein bL32 family.

This chain is Large ribosomal subunit protein bL32, found in Corynebacterium urealyticum (strain ATCC 43042 / DSM 7109).